We begin with the raw amino-acid sequence, 227 residues long: Probable septum site-determining protein MinC (227 aa).

It belongs to the MinC family. Interacts with MinD and FtsZ.

Cell division inhibitor that blocks the formation of polar Z ring septums. Rapidly oscillates between the poles of the cell to destabilize FtsZ filaments that have formed before they mature into polar Z rings. Prevents FtsZ polymerization. This is Probable septum site-determining protein MinC from Bacillus pumilus (strain SAFR-032).